The chain runs to 193 residues: Peptidyl-tRNA hydrolase (193 aa).

Tyr-16 lines the tRNA pocket. The active-site Proton acceptor is His-21. TRNA-binding residues include Phe-67, Asn-69, and Asn-115.

It belongs to the PTH family. In terms of assembly, monomer.

It localises to the cytoplasm. It carries out the reaction an N-acyl-L-alpha-aminoacyl-tRNA + H2O = an N-acyl-L-amino acid + a tRNA + H(+). In terms of biological role, hydrolyzes ribosome-free peptidyl-tRNAs (with 1 or more amino acids incorporated), which drop off the ribosome during protein synthesis, or as a result of ribosome stalling. Its function is as follows. Catalyzes the release of premature peptidyl moieties from peptidyl-tRNA molecules trapped in stalled 50S ribosomal subunits, and thus maintains levels of free tRNAs and 50S ribosomes. This Psychrobacter cryohalolentis (strain ATCC BAA-1226 / DSM 17306 / VKM B-2378 / K5) protein is Peptidyl-tRNA hydrolase.